Reading from the N-terminus, the 37-residue chain is Large ribosomal subunit protein bL36 (37 aa).

The protein belongs to the bacterial ribosomal protein bL36 family.

This is Large ribosomal subunit protein bL36 from Alkaliphilus oremlandii (strain OhILAs) (Clostridium oremlandii (strain OhILAs)).